The chain runs to 115 residues: U3-lycotoxin-Ls1d (115 aa).

The N-terminal stretch at 1 to 20 (MKFVLLFGVLLVTLFSYSSA) is a signal peptide. Positions 21 to 44 (EMLDDFDQADEDELLSLIEKEEAR) are excised as a propeptide. Cystine bridges form between Cys-48–Cys-63, Cys-55–Cys-72, Cys-62–Cys-87, and Cys-74–Cys-85.

The protein belongs to the neurotoxin 19 (CSTX) family. 01 subfamily. As to expression, expressed by the venom gland.

Its subcellular location is the secreted. This Lycosa singoriensis (Wolf spider) protein is U3-lycotoxin-Ls1d.